The sequence spans 237 residues: Ras-related protein Rab-23 (237 aa).

7 residues coordinate GTP: Val-20, Gly-21, Lys-22, Ser-23, Ser-24, Tyr-38, and Thr-41. Ser-23 is a binding site for Mg(2+). The short motif at 28-46 (RYCKGIFTKDYKKTIGVDF) is the Switch 1 element. 2 residues coordinate Mg(2+): Thr-41 and Asp-64. The Switch 2 signature appears at 65–84 (TAGQEEFDAITKAYYRGAQA). GTP is bound by residues Gly-67, Asn-121, Lys-122, Asp-124, Ser-151, Val-152, and Lys-153. 2 positions are modified to phosphoserine: Ser-186 and Ser-187. Residues 188–208 (SNKIGVFNTSGGSHSGQNSGT) show a composition bias toward polar residues. A disordered region spans residues 188–237 (SNKIGVFNTSGGSHSGQNSGTLNGGDVINLRPNKQRTKKNRNPFSSCSIP). A Cysteine methyl ester modification is found at Cys-234. Residue Cys-234 is the site of S-geranylgeranyl cysteine attachment. The propeptide at 235–237 (SIP) is removed in mature form.

It belongs to the small GTPase superfamily. Rab family. Interacts with SUFU. The cofactor is Mg(2+).

It is found in the cell membrane. The protein localises to the cytoplasm. The protein resides in the cytoplasmic vesicle. Its subcellular location is the autophagosome. It localises to the endosome membrane. It is found in the phagosome. The protein localises to the phagosome membrane. It catalyses the reaction GTP + H2O = GDP + phosphate + H(+). Regulated by guanine nucleotide exchange factors (GEFs) which promote the exchange of bound GDP for free GTP. Regulated by GTPase activating proteins (GAPs) which increase the GTP hydrolysis activity. Inhibited by GDP dissociation inhibitors (GDIs). Its function is as follows. The small GTPases Rab are key regulators of intracellular membrane trafficking, from the formation of transport vesicles to their fusion with membranes. Rabs cycle between an inactive GDP-bound form and an active GTP-bound form that is able to recruit to membranes different set of downstream effectors directly responsible for vesicle formation, movement, tethering and fusion. Together with SUFU, prevents nuclear import of GLI1, and thereby inhibits GLI1 transcription factor activity. Regulates GLI1 in differentiating chondrocytes. Likewise, regulates GLI3 proteolytic processing and modulates GLI2 and GLI3 transcription factor activity. Plays a role in autophagic vacuole assembly, and mediates defense against pathogens, such as S.aureus, by promoting their capture by autophagosomes that then merge with lysosomes. The sequence is that of Ras-related protein Rab-23 from Homo sapiens (Human).